We begin with the raw amino-acid sequence, 276 residues long: 3,4-dihydroxyphenylacetate 2,3-dioxygenase (276 aa).

Fe cation is required as a cofactor.

The enzyme catalyses 3,4-dihydroxyphenylacetate + O2 = 2-hydroxy-5-carboxymethylmuconate semialdehyde + H(+). Its pathway is aromatic compound metabolism; 4-hydroxyphenylacetate degradation; pyruvate and succinate semialdehyde from 4-hydroxyphenylacetate: step 2/7. Functionally, transforms homoprotocatechuic acid (HPC) into 5-carboxymethyl-2-hydroxy-muconic semialdehyde (CHMS). The protein is 3,4-dihydroxyphenylacetate 2,3-dioxygenase (hpcB) of Escherichia coli.